The following is a 288-amino-acid chain: Proteasome subunit beta (288 aa).

Residues 1–57 constitute a propeptide, removed in mature form; by autocatalysis; sequence MTVDGQVGRWPVSAIPAAYMRPGSGSFTEFLAGAEPHLLPGRAGAQPAGAAPAVPHG. Residue threonine 58 is the Nucleophile of the active site.

This sequence belongs to the peptidase T1B family. The 20S proteasome core is composed of 14 alpha and 14 beta subunits that assemble into four stacked heptameric rings, resulting in a barrel-shaped structure. The two inner rings, each composed of seven catalytic beta subunits, are sandwiched by two outer rings, each composed of seven alpha subunits. The catalytic chamber with the active sites is on the inside of the barrel. Has a gated structure, the ends of the cylinder being occluded by the N-termini of the alpha-subunits. Is capped by the proteasome-associated ATPase, ARC.

The protein localises to the cytoplasm. It catalyses the reaction Cleavage of peptide bonds with very broad specificity.. Its pathway is protein degradation; proteasomal Pup-dependent pathway. Its activity is regulated as follows. The formation of the proteasomal ATPase ARC-20S proteasome complex, likely via the docking of the C-termini of ARC into the intersubunit pockets in the alpha-rings, may trigger opening of the gate for substrate entry. Interconversion between the open-gate and close-gate conformations leads to a dynamic regulation of the 20S proteasome proteolysis activity. In terms of biological role, component of the proteasome core, a large protease complex with broad specificity involved in protein degradation. The protein is Proteasome subunit beta of Nakamurella multipartita (strain ATCC 700099 / DSM 44233 / CIP 104796 / JCM 9543 / NBRC 105858 / Y-104) (Microsphaera multipartita).